The sequence spans 911 residues: Protein translocase subunit SecA (911 aa).

ATP contacts are provided by residues Gln-87, 105-109 (GEGKT), and Asp-510. Residues Cys-896, Cys-898, Cys-907, and His-908 each coordinate Zn(2+).

This sequence belongs to the SecA family. Monomer and homodimer. Part of the essential Sec protein translocation apparatus which comprises SecA, SecYEG and auxiliary proteins SecDF-YajC and YidC. The cofactor is Zn(2+).

It localises to the cell inner membrane. The protein localises to the cytoplasm. It catalyses the reaction ATP + H2O + cellular proteinSide 1 = ADP + phosphate + cellular proteinSide 2.. Its function is as follows. Part of the Sec protein translocase complex. Interacts with the SecYEG preprotein conducting channel. Has a central role in coupling the hydrolysis of ATP to the transfer of proteins into and across the cell membrane, serving both as a receptor for the preprotein-SecB complex and as an ATP-driven molecular motor driving the stepwise translocation of polypeptide chains across the membrane. This chain is Protein translocase subunit SecA, found in Acinetobacter baumannii (strain SDF).